A 266-amino-acid polypeptide reads, in one-letter code: Tryptophan synthase alpha chain (266 aa).

Active-site proton acceptor residues include glutamate 49 and aspartate 60.

The protein belongs to the TrpA family. As to quaternary structure, tetramer of two alpha and two beta chains.

The catalysed reaction is (1S,2R)-1-C-(indol-3-yl)glycerol 3-phosphate + L-serine = D-glyceraldehyde 3-phosphate + L-tryptophan + H2O. It participates in amino-acid biosynthesis; L-tryptophan biosynthesis; L-tryptophan from chorismate: step 5/5. Its function is as follows. The alpha subunit is responsible for the aldol cleavage of indoleglycerol phosphate to indole and glyceraldehyde 3-phosphate. The sequence is that of Tryptophan synthase alpha chain from Synechococcus elongatus (strain ATCC 33912 / PCC 7942 / FACHB-805) (Anacystis nidulans R2).